The sequence spans 218 residues: Guanylate kinase (218 aa).

The 180-residue stretch at 14–193 (GVMLVLSSPS…AFASVRAIVS (180 aa)) folds into the Guanylate kinase-like domain. An ATP-binding site is contributed by 21-28 (SPSGAGKS).

It belongs to the guanylate kinase family.

It is found in the cytoplasm. It carries out the reaction GMP + ATP = GDP + ADP. In terms of biological role, essential for recycling GMP and indirectly, cGMP. The polypeptide is Guanylate kinase (Chelativorans sp. (strain BNC1)).